Consider the following 910-residue polypeptide: Lysine-specific demethylase 7 homolog (910 aa).

The segment covering 1 to 11 (MDGNDINIQKN) has biased composition (polar residues). 3 disordered regions span residues 1–58 (MDGN…HQTP), 103–162 (NKMG…GSEP), and 183–212 (QEELKLEVDSDSEEDDVPEQKTPKESDRCG). A compositionally biased stretch (basic and acidic residues) spans 25–35 (QHSDHKNHESA). The segment covering 43 to 58 (YTASQPALSSTEHQTP) has biased composition (polar residues). The segment covering 118–130 (PKSEPKIEPHVTD) has biased composition (basic and acidic residues). Over residues 150–160 (ESNQNYVSNGS) the composition is skewed to polar residues. Residues 200 to 210 (PEQKTPKESDR) are compositionally biased toward basic and acidic residues. The segment at 208-290 (SDRCGGCGKF…KFFCPKCVPH (83 aa)) adopts a PHD-type zinc-finger fold. One can recognise a JmjC domain in the interval 441 to 612 (SDNNEMKEIA…MQMRVYHLEN (172 aa)). Substrate-binding positions include 505-510 (TDFHVD), Tyr-518, Lys-525, and His-580. Residues His-508 and Asp-510 each contribute to the Fe cation site. A Fe cation-binding site is contributed by His-580. Disordered stretches follow at residues 712–790 (KIQN…PSEV) and 864–910 (EAVH…KLKM). The span at 748–757 (YKKKYTKKAK) shows a compositional bias: basic residues. Over residues 758-780 (KDNDDAPKVKKAKKEEVPEEKVP) the composition is skewed to basic and acidic residues.

Belongs to the JHDM1 histone demethylase family. JHDM1D subfamily. It depends on Fe(2+) as a cofactor. In terms of tissue distribution, mainly expressed in neurons. Also weakly expressed in some muscle, intestinal and hypodermal cells.

It localises to the nucleus. With respect to regulation, competitively inhibited by 2-hydroxyglutarate. Functionally, histone demethylase required for nervous system development. Specifically demethylates dimethylated 'Lys-9', 'Lys-23' and 'Lys-27' (H3K9me2, H3K23me2 and H3K27me2, respectively) of histone H3, thereby playing a central role in histone code. Promotes mitochondrial stress-induced longevity. The sequence is that of Lysine-specific demethylase 7 homolog (jmjd-1.2) from Caenorhabditis elegans.